The chain runs to 326 residues: Thrombopoietin (326 aa).

The N-terminal stretch at 1–21 is a signal peptide; that stretch reads MELTDLLLVAILLLTARLTLS. 2 cysteine pairs are disulfide-bonded: Cys28–Cys172 and Cys50–Cys106. Asn197, Asn206, Asn235, Asn249, and Asn256 each carry an N-linked (GlcNAc...) asparagine glycan. Positions 307–326 are disordered; it reads FPPSPTFPTPGSPPQLPPVS. Residues 308–326 show a composition bias toward pro residues; that stretch reads PPSPTFPTPGSPPQLPPVS.

It belongs to the EPO/TPO family.

Its subcellular location is the secreted. Its function is as follows. Lineage-specific cytokine affecting the proliferation and maturation of megakaryocytes from their committed progenitor cells. It acts at a late stage of megakaryocyte development. It may be the major physiological regulator of circulating platelets. This is Thrombopoietin (Thpo) from Rattus norvegicus (Rat).